We begin with the raw amino-acid sequence, 648 residues long: MTLNAESEALVGVSHPLDPLSRVEIARAVAILKEGPAAAESFRFISVELREPSKDDLRAGVAVAREADAVLVDRAQARSFEAVVDLEAGTVDSWKLLAENIQPPFMLDEFAECEDACRKDPEVIAALAKRGLTNLDLVCFEPWSVGYFGEDNEGRRLMRALVFVRDEADDSPYAHPIENFIVFYDLNAGKVVRLEDDQAIPVPSARGNYLPKYVGEARTDLKPLNITQPEGASFTVTGNHVTWADWSFRVGFTPREGLVLHQLKFKDQGVDRPVINRASLSEMVVPYGDTAPVQAKKNAFDSGEYNIGNMANSLTLGCDCLGEIKYFDGHSVDSHGNPWTIENAICMHEEDDSILWKHFDFREGTAETRRSRKLVISFIATVANYEYAFYWHLFLDGSIEFLVKATGILSTAGQLPGEKNPYGQSLNNDGLYAPIHQHMFNVRMDFELDGVKNAVYEVDMEYPEHNPTGTAFMAVDRLLETEQKAIRKTNEAKHRFWKIANHESKNLVNEPVAYRLIPTNGIQLAARDDAYVSKRAQFARNNLWVTAYDRTERFAAGEYPNQATGADDGLHIWTQKDRNIVDTDLVVWYTFGMHHVVRLEDWPVMPRQNIGFMLEPHGFFNQNPTLNLPTSTSTTQTGEADTCCHTDK.

The propeptide occupies 1 to 9; that stretch reads MTLNAESEA. Residue 299–310 participates in substrate binding; the sequence is AFDSGEYNIGNM. The active-site Proton acceptor is the Asp301. Cys320 and Cys346 are joined by a disulfide. Position 382–387 (382–387) interacts with substrate; the sequence is VANYEY. The active-site Schiff-base intermediate with substrate; via topaquinone is the Tyr385. A 2',4',5'-topaquinone modification is found at Tyr385. His436 and His438 together coordinate Cu cation. Positions 445, 446, and 584 each coordinate Mn(2+). His595 contacts Cu cation. The disordered stretch occupies residues 629 to 648; it reads PTSTSTTQTGEADTCCHTDK.

Belongs to the copper/topaquinone oxidase family. As to quaternary structure, homodimer. Cu cation serves as cofactor. Zn(2+) is required as a cofactor. Requires L-topaquinone as cofactor. It depends on Mn(2+) as a cofactor. In terms of processing, topaquinone (TPQ) is generated by copper-dependent autoxidation of a specific tyrosyl residue.

The enzyme catalyses a primary methyl amine + O2 + H2O = an aldehyde + H2O2 + NH4(+). The polypeptide is Copper methylamine oxidase (maoII) (Arthrobacter sp. (strain P1)).